Reading from the N-terminus, the 1120-residue chain is Transcription-repair-coupling factor (1120 aa).

One can recognise a Helicase ATP-binding domain in the interval 591–756; sequence DLTNGMLMDR…LTGLKELSII (166 aa). 604 to 611 provides a ligand contact to ATP; sequence GDVGFGKT. Residues 709–712 carry the DEEQ box motif; that stretch reads DEEQ. Residues 777 to 933 enclose the Helicase C-terminal domain; the sequence is IIRDALLREH…TIASHDADLR (157 aa).

This sequence in the N-terminal section; belongs to the UvrB family. The protein in the C-terminal section; belongs to the helicase family. RecG subfamily.

It localises to the cytoplasm. In terms of biological role, couples transcription and DNA repair by recognizing RNA polymerase (RNAP) stalled at DNA lesions. Mediates ATP-dependent release of RNAP and its truncated transcript from the DNA, and recruitment of nucleotide excision repair machinery to the damaged site. The protein is Transcription-repair-coupling factor of Rickettsia typhi (strain ATCC VR-144 / Wilmington).